Consider the following 278-residue polypeptide: Tryptophan 2,3-dioxygenase (278 aa).

Substrate-binding positions include 47 to 51 (FIVQH), Tyr-109, and Arg-113. His-236 serves as a coordination point for heme. Thr-250 contributes to the substrate binding site.

Belongs to the tryptophan 2,3-dioxygenase family. Homotetramer. It depends on heme as a cofactor.

It carries out the reaction L-tryptophan + O2 = N-formyl-L-kynurenine. It functions in the pathway amino-acid degradation; L-tryptophan degradation via kynurenine pathway; L-kynurenine from L-tryptophan: step 1/2. Functionally, heme-dependent dioxygenase that catalyzes the oxidative cleavage of the L-tryptophan (L-Trp) pyrrole ring and converts L-tryptophan to N-formyl-L-kynurenine. Catalyzes the oxidative cleavage of the indole moiety. The sequence is that of Tryptophan 2,3-dioxygenase from Ralstonia pickettii (strain 12J).